The chain runs to 592 residues: Salivary peroxidase/catechol oxidase (592 aa).

Residues 1–21 (MWMFLKLLLFVCSSWWSCAQA) form the signal peptide. C24 and C37 are disulfide-bonded. N25 carries an N-linked (GlcNAc...) asparagine glycan. The active-site Proton acceptor is H110. D111, T187, F189, D191, and S193 together coordinate Ca(2+). N230 carries N-linked (GlcNAc...) asparagine glycosylation. C235 and C244 are disulfide-bonded. H353 contacts heme b. N366 is a glycosylation site (N-linked (GlcNAc...) asparagine). Intrachain disulfides connect C452–C509 and C553–C580.

It belongs to the peroxidase family. XPO subfamily. As to expression, female salivary gland.

Its subcellular location is the secreted. The catalysed reaction is 2 catechol + O2 = 2 1,2-benzoquinone + 2 H2O. Inhibits noradrenaline-induced smooth muscle contraction in the host, probably due to the oxidation of noradrenaline, resulting in vasodilation. Exhibits peroxidase activity. This chain is Salivary peroxidase/catechol oxidase, found in Anopheles albimanus (New world malaria mosquito).